The sequence spans 65 residues: DNA-directed RNA polymerase subunit Rpo10 (65 aa).

Residues cysteine 7, cysteine 10, cysteine 44, and cysteine 45 each contribute to the Zn(2+) site.

The protein belongs to the archaeal Rpo10/eukaryotic RPB10 RNA polymerase subunit family. In terms of assembly, part of the RNA polymerase complex. The cofactor is Zn(2+).

The protein resides in the cytoplasm. It localises to the chromosome. The enzyme catalyses RNA(n) + a ribonucleoside 5'-triphosphate = RNA(n+1) + diphosphate. In terms of biological role, DNA-dependent RNA polymerase (RNAP) catalyzes the transcription of DNA into RNA using the four ribonucleoside triphosphates as substrates. In Thermococcus kodakarensis (strain ATCC BAA-918 / JCM 12380 / KOD1) (Pyrococcus kodakaraensis (strain KOD1)), this protein is DNA-directed RNA polymerase subunit Rpo10.